Here is a 222-residue protein sequence, read N- to C-terminus: MLWLLFFLVTAIHADLCRPDAENAFKVRLSIRTALGDKAYAWDANEEYLFKAMVAFSMRKVPNRETTEISHVLLCNVTQRVSFWFVVTDPSRNHTLPAVEVQSAIRMNRNRINNAFFLNDQTLEFLRIPSTLAPPTDPSVPIWIIIFGVIFCIVLVATMLLIISGIRQHRRKNKGPSEMEDSEDKCENVITIENGIPCDPLDMKGGHINDAFVTEDERLTPL.

An N-terminal signal peptide occupies residues 1-14 (MLWLLFFLVTAIHA). Over 15–141 (DLCRPDAENA…LAPPTDPSVP (127 aa)) the chain is Extracellular. Residues 21–222 (AENAFKVRLS…VTEDERLTPL (202 aa)) form the Collectrin-like domain. N-linked (GlcNAc...) asparagine glycosylation is found at Asn-76 and Asn-93. A helical transmembrane segment spans residues 142–162 (IWIIIFGVIFCIVLVATMLLI). Topologically, residues 163–222 (ISGIRQHRRKNKGPSEMEDSEDKCENVITIENGIPCDPLDMKGGHINDAFVTEDERLTPL) are cytoplasmic. Residues Thr-214 and Thr-220 each carry the phosphothreonine modification.

Belongs to the CLTRN family. Monomer. Homodimer; dimerization prevents CLTRN cleavage by BACE2. Interacts with SLC6A18; this interaction regulates the trafficking of SLC6A18 to the cell membrane and its amino acid transporter activity. Interacts with SLC6A19; this interaction regulates the trafficking of SLC6A19 to the cell membrane and its amino acid transporter activity. Interacts with SNAPIN. Glycosylated. Glycosylation is required for plasma membrane localization and for its cleavage by BACE2. In terms of processing, proteolytically processed in pancreatic beta cells by BACE2 leading to the generation and extracellular release of soluble CLTRN, and a corresponding cell-associated C-terminal fragment which is later cleaved by gamma-secretase. This shedding process inactivates CLTRN. Three cleavage sites have been identified for BACE2, two clustered sites after Phe-116 and Leu-118 and a more membrane proximal site at Phe-125; the preferred BACE2 cleavage site seems to be between Phe-125 and Leu-126, Phe-116 and Leu-118 act as alternative sites.

Its subcellular location is the cell membrane. Functionally, plays an important role in amino acid transport by acting as binding partner of amino acid transporters SLC6A18 and SLC6A19, regulating their trafficking on the cell surface and their activity. May also play a role in trafficking of amino acid transporters SLC3A1 and SLC7A9 to the renal cortical cell membrane. Regulator of SNARE complex function. Stimulator of beta cell replication. This Bos taurus (Bovine) protein is Collectrin (CLTRN).